Consider the following 253-residue polypeptide: MGQPLPPVALLLLVSASSRAADVPKALVLLDPPWASVLKDDHVTLKCQGLHPAGDNTTQWLHNGSLLSSQAPAYTITAARAEDGGEYRCQTGLSSLSDPVQLHVHLGWLVLQAPRWVFQEGEPIQLRCHSWKNNKLHKVTYLQNGRGLRYFHQNSDLHIPEATRNHSGSYFCRGLIGHHNMSSETVTITVQGPANPVISSSVLPWHQIAFCLVMGLLLAADTGLYFSVQRDLRSSQRARKEHTLGWSLGSQDK.

Positions 1–20 (MGQPLPPVALLLLVSASSRA) are cleaved as a signal peptide. Residues 21–207 (ADVPKALVLL…ISSSVLPWHQ (187 aa)) lie on the Extracellular side of the membrane. Ig-like C2-type domains are found at residues 24-90 (PKAL…YRCQ) and 99-189 (PVQL…VTIT). 2 disulfides stabilise this stretch: Cys-47–Cys-89 and Cys-128–Cys-172. N-linked (GlcNAc...) asparagine glycans are attached at residues Asn-56, Asn-63, Asn-165, and Asn-180. The helical transmembrane segment at 208 to 226 (IAFCLVMGLLLAADTGLYF) threads the bilayer. At 227-253 (SVQRDLRSSQRARKEHTLGWSLGSQDK) the chain is on the cytoplasmic side.

Forms a heterooligomeric complex with ITAM-containing signaling subunits FCER1G. Interacts (via transmembrane domain) with signaling subunits; this interaction is a prerequisite for receptor complex expression on the cell surface and intracellular signal transduction. Binds the Fc region of antigen-complexed IgG.

The protein resides in the cell membrane. Receptor for the invariable Fc fragment of immunoglobulin gamma (IgG). Optimally activated upon binding of clustered antigen-IgG complexes displayed on cell surfaces, triggers lysis of antibody-coated cells, a process known as antibody-dependent cellular cytotoxicity (ADCC). Does not bind free monomeric IgG, thus avoiding inappropriate effector cell activation in the absence of antigenic trigger. Mediates IgG effector functions on natural killer (NK) cells. Binds antigen-IgG complexes generated upon infection and triggers NK cell-dependent cytokine production and degranulation to limit viral load and propagation. Fc-binding subunit that associates with FCER1G adapter to form functional signaling complexes. Following the engagement of antigen-IgG complexes, triggers phosphorylation of immunoreceptor tyrosine-based activation motif (ITAM)-containing adapters with subsequent activation of phosphatidylinositol 3-kinase signaling and sustained elevation of intracellular calcium that ultimately drive NK cell activation. Mediates enhanced ADCC in response to afucosylated IgGs. The sequence is that of Low affinity immunoglobulin gamma Fc region receptor III-A from Oryctolagus cuniculus (Rabbit).